Here is a 253-residue protein sequence, read N- to C-terminus: Isopentenyl-diphosphate delta-isomerase IDI1 (253 aa).

Position 61 (lysine 61) interacts with substrate. Histidine 65 and histidine 76 together coordinate Mg(2+). In terms of domain architecture, Nudix hydrolase spans 74–224; it reads LLHRAFSVFL…SLVFTPWFKL (151 aa). 2 residues coordinate substrate: glutamine 94 and lysine 99. Cysteine 111 is a catalytic residue. Serine 112 lines the substrate pocket. The short motif at 112-145 is the Nudix box element; it reads SHPLHIPTETGSTLEDSIAGVKRAAQRKLEHELG. Mg(2+)-binding residues include glutamate 174 and glutamate 176. The active site involves glutamate 176.

Belongs to the IPP isomerase type 1 family. Mg(2+) is required as a cofactor.

The catalysed reaction is isopentenyl diphosphate = dimethylallyl diphosphate. Its pathway is isoprenoid biosynthesis; dimethylallyl diphosphate biosynthesis; dimethylallyl diphosphate from isopentenyl diphosphate: step 1/1. Functionally, isopentenyl-diphosphate delta-isomerase; part of the second module of ergosterol biosynthesis pathway that includes the middle steps of the pathway. IDI1 catalyzes the 1,3-allylic rearrangement of isopentenyl (IPP) to its highly electrophilic allylic isomer, dimethylallyl diphosphate (DMAPP). The second module is carried out in the vacuole and involves the formation of farnesyl diphosphate, which is also an important intermediate in the biosynthesis of ubiquinone, dolichol, heme and prenylated proteins. Activity by the mevalonate kinase ERG12 (FG05912) first converts mevalonate into 5-phosphomevalonate. 5-phosphomevalonate is then further converted to 5-diphosphomevalonate by the phosphomevalonate kinase ERG8 (FG09764). The diphosphomevalonate decarboxylase ERG19 (FG10424) then produces isopentenyl diphosphate. The isopentenyl-diphosphate delta-isomerase IDI1 (FG09722) then catalyzes the 1,3-allylic rearrangement of the homoallylic substrate isopentenyl (IPP) to its highly electrophilic allylic isomer, dimethylallyl diphosphate (DMAPP). Finally the farnesyl diphosphate synthase ERG20 (FG06784) catalyzes the sequential condensation of isopentenyl pyrophosphate with dimethylallyl pyrophosphate, and then with the resultant geranylpyrophosphate to the ultimate product farnesyl pyrophosphate. The sequence is that of Isopentenyl-diphosphate delta-isomerase IDI1 from Gibberella zeae (strain ATCC MYA-4620 / CBS 123657 / FGSC 9075 / NRRL 31084 / PH-1) (Wheat head blight fungus).